Here is a 342-residue protein sequence, read N- to C-terminus: MSANGPAAEPADGGRAVPAGGGEAVPAGGGRAVPAGGGEAAGTVVAVVGPTAAGKSALSIALAHALDGEVVNADSMQLYRGMDIGTAKLTTGEREGVPHHLLDIWPVTEPASVAEYQRLARAAVDDILARGRVPLLVGGSGLYVRAVLERFEFPGTDPAVRARLEAELAQAGPAPLHARLRAADPDAAASILPGNGRRIVRALEVIELTGAPFTAALPDPSPYYRSVQVGVDLDTAPLDERIALRVDRMWADGLVAETRALAAQGLAGGRTASRALGYQQVLRFLAGELTETEAHQETIRATRRFVRRQRSWFRRDPRIAWLDSAGSGLVADALRAVRAAAR.

The segment at 1 to 30 (MSANGPAAEPADGGRAVPAGGGEAVPAGGG) is disordered. Over residues 19–30 (AGGGEAVPAGGG) the composition is skewed to gly residues. 49 to 56 (GPTAAGKS) serves as a coordination point for ATP. 51 to 56 (TAAGKS) lines the substrate pocket. An interaction with substrate tRNA region spans residues 74–77 (DSMQ).

Belongs to the IPP transferase family. In terms of assembly, monomer. Mg(2+) is required as a cofactor.

The enzyme catalyses adenosine(37) in tRNA + dimethylallyl diphosphate = N(6)-dimethylallyladenosine(37) in tRNA + diphosphate. In terms of biological role, catalyzes the transfer of a dimethylallyl group onto the adenine at position 37 in tRNAs that read codons beginning with uridine, leading to the formation of N6-(dimethylallyl)adenosine (i(6)A). The chain is tRNA dimethylallyltransferase from Salinispora arenicola (strain CNS-205).